Here is a 489-residue protein sequence, read N- to C-terminus: 5-hydroxytryptamine receptor 3A (489 aa).

The N-terminal stretch at 1–23 is a signal peptide; that stretch reads MRLCIPQVLLALFLSMLTAPGEG. The Extracellular segment spans residues 24–246; it reads SRRRATQARD…MKFYVIIRRR (223 aa). Residues N109, N175, and N191 are each glycosylated (N-linked (GlcNAc...) asparagine). C162 and C176 are disulfide-bonded. Residues 247–273 form a helical membrane-spanning segment; it reads PLFYAVSLLLPSIFLMVVDIVGFCLPP. At 274-278 the chain is on the cytoplasmic side; it reads DSGER. Residues 279 to 297 traverse the membrane as a helical segment; that stretch reads VSFKITLLLGYSVFLIIVS. Residues 298–307 lie on the Extracellular side of the membrane; it reads DTLPATAIGT. The helical transmembrane segment at 308 to 326 threads the bilayer; the sequence is PLIGVYFVVCMALLVISLA. At 327-466 the chain is on the cytoplasmic side; that stretch reads ETIFIVRLVH…GYVLDRLLFR (140 aa). An HA-stretch; determines single-channel conductance in 5-HT3 receptors region spans residues 425–461; the sequence is AVRGLLQELSSIRHFLEKRDEMREVARDWLRVGYVLD. A helical transmembrane segment spans residues 467-486; it reads IYLLAVLAYSITLVTLWSIW. The Extracellular portion of the chain corresponds to 487–489; the sequence is HYS.

The protein belongs to the ligand-gated ion channel (TC 1.A.9) family. 5-hydroxytryptamine receptor (TC 1.A.9.2) subfamily. HTR3A sub-subfamily. Forms homopentameric as well as heteropentameric serotonin-activated cation-selective channel complexes with HTR3B or HTR3C or HTR3D or HTR3E. The homomeric complex is functional but exhibits low conductance with modified voltage dependence, and decreased agonist and antagonist affinity. Heteropentameric complexes display properties which resemble that of neuronal serotonin-activated channels in vivo. Interacts with RIC3. Brain, spinal cord, and heart.

The protein localises to the postsynaptic cell membrane. Its subcellular location is the cell membrane. The enzyme catalyses Na(+)(in) = Na(+)(out). The catalysed reaction is K(+)(in) = K(+)(out). It catalyses the reaction Ca(2+)(in) = Ca(2+)(out). It carries out the reaction Mg(2+)(in) = Mg(2+)(out). Forms serotonin (5-hydroxytryptamine/5-HT3)-activated cation-selective channel complexes, which when activated cause fast, depolarizing responses in neurons. This is 5-hydroxytryptamine receptor 3A from Mus musculus (Mouse).